Reading from the N-terminus, the 192-residue chain is Peptidyl-tRNA hydrolase (192 aa).

His17 is a tRNA binding site. His22 functions as the Proton acceptor in the catalytic mechanism. TRNA contacts are provided by Phe68, Asn70, and Asn116.

Belongs to the PTH family. As to quaternary structure, monomer.

The protein localises to the cytoplasm. It carries out the reaction an N-acyl-L-alpha-aminoacyl-tRNA + H2O = an N-acyl-L-amino acid + a tRNA + H(+). Functionally, hydrolyzes ribosome-free peptidyl-tRNAs (with 1 or more amino acids incorporated), which drop off the ribosome during protein synthesis, or as a result of ribosome stalling. Its function is as follows. Catalyzes the release of premature peptidyl moieties from peptidyl-tRNA molecules trapped in stalled 50S ribosomal subunits, and thus maintains levels of free tRNAs and 50S ribosomes. This is Peptidyl-tRNA hydrolase from Xylella fastidiosa (strain 9a5c).